The primary structure comprises 589 residues: Probable arginine--tRNA ligase, cytoplasmic (589 aa).

L-arginine is bound by residues 121–123 (SPN), His-132, Tyr-332, Asp-336, and Gln-360. Residues 121–132 (SPNIAKPFHAGH) carry the 'HIGH' region motif. The interval 469 to 483 (DTGPYLQYAHARLCS) is interaction with tRNA.

The protein belongs to the class-I aminoacyl-tRNA synthetase family.

It is found in the cytoplasm. Its subcellular location is the cytosol. The catalysed reaction is tRNA(Arg) + L-arginine + ATP = L-arginyl-tRNA(Arg) + AMP + diphosphate. In terms of biological role, forms part of a macromolecular complex that catalyzes the attachment of specific amino acids to cognate tRNAs during protein synthesis. This chain is Probable arginine--tRNA ligase, cytoplasmic (argS1), found in Dictyostelium discoideum (Social amoeba).